The following is a 172-amino-acid chain: Translation initiation factor IF-3 (172 aa).

This sequence belongs to the IF-3 family. Monomer.

The protein localises to the cytoplasm. In terms of biological role, IF-3 binds to the 30S ribosomal subunit and shifts the equilibrium between 70S ribosomes and their 50S and 30S subunits in favor of the free subunits, thus enhancing the availability of 30S subunits on which protein synthesis initiation begins. In Geobacillus stearothermophilus (Bacillus stearothermophilus), this protein is Translation initiation factor IF-3.